The following is a 771-amino-acid chain: Ribonucleoside-diphosphate reductase large subunit (771 aa).

The ATP-cone domain maps to 1-92; that stretch reads MFVIKRNGYK…VSNLHKETKK (92 aa). ATP contacts are provided by residues 5–6, 11–17, Thr53, Asp57, and Lys88; these read KR and ENVMFDK. Positions 202 and 217 each coordinate GDP. Residues 226 to 228, Lys243, and Arg256 each bind dTTP; that span reads DSI. Residue Asn427 coordinates GDP. Asn427 (proton acceptor) is an active-site residue. The active-site Cysteine radical intermediate is Cys429. GDP-binding positions include Glu431 and 603-606; that span reads TAST. Catalysis depends on Glu431, which acts as the Proton acceptor.

The protein belongs to the ribonucleoside diphosphate reductase large chain family. In terms of assembly, interacts with RNR2/OPG047 subunit. Requires Mg(2+) as cofactor.

It catalyses the reaction a 2'-deoxyribonucleoside 5'-diphosphate + [thioredoxin]-disulfide + H2O = a ribonucleoside 5'-diphosphate + [thioredoxin]-dithiol. Ribonucleoside-diphosphate reductase holoenzyme provides the precursors necessary for viral DNA synthesis. Allows virus growth in non-dividing cells. Catalyzes the biosynthesis of deoxyribonucleotides from the corresponding ribonucleotides. This Homo sapiens (Human) protein is Ribonucleoside-diphosphate reductase large subunit (OPG080).